The sequence spans 142 residues: Translation initiation factor 2 subunit beta (142 aa).

It belongs to the eIF-2-beta/eIF-5 family. As to quaternary structure, heterotrimer composed of an alpha, a beta and a gamma chain.

Its function is as follows. eIF-2 functions in the early steps of protein synthesis by forming a ternary complex with GTP and initiator tRNA. The chain is Translation initiation factor 2 subunit beta from Thermococcus gammatolerans (strain DSM 15229 / JCM 11827 / EJ3).